A 155-amino-acid polypeptide reads, in one-letter code: Ribosomal RNA large subunit methyltransferase H (155 aa).

S-adenosyl-L-methionine-binding positions include leucine 72, glycine 103, and 122–127 (LSDLTL).

This sequence belongs to the RNA methyltransferase RlmH family. Homodimer.

It localises to the cytoplasm. The catalysed reaction is pseudouridine(1915) in 23S rRNA + S-adenosyl-L-methionine = N(3)-methylpseudouridine(1915) in 23S rRNA + S-adenosyl-L-homocysteine + H(+). In terms of biological role, specifically methylates the pseudouridine at position 1915 (m3Psi1915) in 23S rRNA. In Delftia acidovorans (strain DSM 14801 / SPH-1), this protein is Ribosomal RNA large subunit methyltransferase H.